Reading from the N-terminus, the 493-residue chain is Cytochrome P450 monooxygenase astA (493 aa).

The helical transmembrane segment at 5–25 threads the bilayer; it reads EIILLGLAALAVTYQVIVWIY. N-linked (GlcNAc...) asparagine glycans are attached at residues Asn174 and Asn286. Cys433 lines the heme pocket.

Belongs to the cytochrome P450 family. The cofactor is heme.

It localises to the membrane. It carries out the reaction asperterpenoid A + reduced [NADPH--hemoprotein reductase] + O2 = asperterpenoid C + oxidized [NADPH--hemoprotein reductase] + H2O + H(+). Its pathway is secondary metabolite biosynthesis; terpenoid biosynthesis. Functionally, cytochrome P450 monooxygenase; part of the gene cluster that mediates the biosynthesis of the asperterpenoids, sesterterpenes that exhibit anti-tuberculosis activity. The first step of the pathway is performed by the sesterterpene synthase astC that possesses both prenyl transferase and terpene cyclase activity, converting isopentenyl diphosphate and dimethylallyl diphosphate into geranylfarnesyl diphosphate (GFPP) and further converting GFPP into preasperterpenoid A, respectively. The cytochrome P450 monooxygenase astB then dually oxidizes preasperterpenoid A to produce asperterpenoid A along with a minor product, asperterpenoid B. Finally, the cytochrome P450 monooxygenase astA converts asperterpenoid A into asperterpenoid C. This chain is Cytochrome P450 monooxygenase astA, found in Talaromyces wortmannii (Penicillium wortmannii).